Reading from the N-terminus, the 471-residue chain is Ribulose bisphosphate carboxylase large chain 2 (471 aa).

Asn-116 and Thr-166 together coordinate substrate. The active-site Proton acceptor is Lys-168. Lys-170 is a substrate binding site. 3 residues coordinate Mg(2+): Lys-194, Asp-196, and Glu-197. An N6-carboxylysine modification is found at Lys-194. His-287 acts as the Proton acceptor in catalysis. Residues Arg-288, His-320, and Ser-372 each contribute to the substrate site.

The protein belongs to the RuBisCO large chain family. Type I subfamily. As to quaternary structure, heterohexadecamer of 8 large chains and 8 small chains. The cofactor is Mg(2+).

Its subcellular location is the carboxysome. The catalysed reaction is 2 (2R)-3-phosphoglycerate + 2 H(+) = D-ribulose 1,5-bisphosphate + CO2 + H2O. The enzyme catalyses D-ribulose 1,5-bisphosphate + O2 = 2-phosphoglycolate + (2R)-3-phosphoglycerate + 2 H(+). In terms of biological role, ruBisCO catalyzes two reactions: the carboxylation of D-ribulose 1,5-bisphosphate, the primary event in carbon dioxide fixation, as well as the oxidative fragmentation of the pentose substrate. Both reactions occur simultaneously and in competition at the same active site. This is Ribulose bisphosphate carboxylase large chain 2 from Hydrogenovibrio marinus.